The primary structure comprises 255 residues: Thiazole synthase (255 aa).

K96 serves as the catalytic Schiff-base intermediate with DXP. 1-deoxy-D-xylulose 5-phosphate is bound by residues G157, 183 to 184 (AG), and 205 to 206 (NT).

Belongs to the ThiG family. As to quaternary structure, homotetramer. Forms heterodimers with either ThiH or ThiS.

It is found in the cytoplasm. It carries out the reaction [ThiS sulfur-carrier protein]-C-terminal-Gly-aminoethanethioate + 2-iminoacetate + 1-deoxy-D-xylulose 5-phosphate = [ThiS sulfur-carrier protein]-C-terminal Gly-Gly + 2-[(2R,5Z)-2-carboxy-4-methylthiazol-5(2H)-ylidene]ethyl phosphate + 2 H2O + H(+). It functions in the pathway cofactor biosynthesis; thiamine diphosphate biosynthesis. Catalyzes the rearrangement of 1-deoxy-D-xylulose 5-phosphate (DXP) to produce the thiazole phosphate moiety of thiamine. Sulfur is provided by the thiocarboxylate moiety of the carrier protein ThiS. In vitro, sulfur can be provided by H(2)S. This chain is Thiazole synthase, found in Staphylococcus saprophyticus subsp. saprophyticus (strain ATCC 15305 / DSM 20229 / NCIMB 8711 / NCTC 7292 / S-41).